A 551-amino-acid chain; its full sequence is Formate--tetrahydrofolate ligase (551 aa).

T61–S68 is an ATP binding site.

The protein belongs to the formate--tetrahydrofolate ligase family.

It carries out the reaction (6S)-5,6,7,8-tetrahydrofolate + formate + ATP = (6R)-10-formyltetrahydrofolate + ADP + phosphate. Its pathway is one-carbon metabolism; tetrahydrofolate interconversion. This Lactiplantibacillus plantarum (strain ATCC BAA-793 / NCIMB 8826 / WCFS1) (Lactobacillus plantarum) protein is Formate--tetrahydrofolate ligase.